A 358-amino-acid chain; its full sequence is Uroporphyrinogen decarboxylase (358 aa).

Substrate-binding positions include R29–R33, D79, Y155, S210, and H330.

The protein belongs to the uroporphyrinogen decarboxylase family. As to quaternary structure, homodimer.

It is found in the cytoplasm. It catalyses the reaction uroporphyrinogen III + 4 H(+) = coproporphyrinogen III + 4 CO2. It participates in porphyrin-containing compound metabolism; protoporphyrin-IX biosynthesis; coproporphyrinogen-III from 5-aminolevulinate: step 4/4. Its function is as follows. Catalyzes the decarboxylation of four acetate groups of uroporphyrinogen-III to yield coproporphyrinogen-III. This chain is Uroporphyrinogen decarboxylase, found in Bordetella petrii (strain ATCC BAA-461 / DSM 12804 / CCUG 43448).